A 603-amino-acid chain; its full sequence is Coiled-coil domain-containing protein 148 (603 aa).

2 coiled-coil regions span residues 365-429 (LAKD…KKKK) and 461-510 (EQSL…KQVA).

This Macaca fascicularis (Crab-eating macaque) protein is Coiled-coil domain-containing protein 148 (CCDC148).